We begin with the raw amino-acid sequence, 63 residues long: uncharacterized protein (63 aa).

A helical transmembrane segment spans residues 37 to 57; the sequence is IFFPTTFDVLLLAILIFLACA.

The protein localises to the cell membrane. This is an uncharacterized protein from Bacillus subtilis (strain 168).